We begin with the raw amino-acid sequence, 371 residues long: Queuine tRNA-ribosyltransferase (371 aa).

Asp-92 functions as the Proton acceptor in the catalytic mechanism. Residues 92 to 96 (DSGGF), Asp-147, Gln-190, and Gly-217 contribute to the substrate site. The interval 248 to 254 (GVGKPID) is RNA binding. Asp-267 functions as the Nucleophile in the catalytic mechanism. Positions 272–276 (TRSGR) are RNA binding; important for wobble base 34 recognition.

Belongs to the queuine tRNA-ribosyltransferase family. As to quaternary structure, homodimer. Within each dimer, one monomer is responsible for RNA recognition and catalysis, while the other monomer binds to the replacement base PreQ1.

It carries out the reaction 7-aminomethyl-7-carbaguanine + guanosine(34) in tRNA = 7-aminomethyl-7-carbaguanosine(34) in tRNA + guanine. The protein operates within tRNA modification; tRNA-queuosine biosynthesis. Functionally, catalyzes the base-exchange of a guanine (G) residue with the queuine precursor 7-aminomethyl-7-deazaguanine (PreQ1) at position 34 (anticodon wobble position) in tRNAs with GU(N) anticodons (tRNA-Asp, -Asn, -His and -Tyr). Catalysis occurs through a double-displacement mechanism. The nucleophile active site attacks the C1' of nucleotide 34 to detach the guanine base from the RNA, forming a covalent enzyme-RNA intermediate. The proton acceptor active site deprotonates the incoming PreQ1, allowing a nucleophilic attack on the C1' of the ribose to form the product. After dissociation, two additional enzymatic reactions on the tRNA convert PreQ1 to queuine (Q), resulting in the hypermodified nucleoside queuosine (7-(((4,5-cis-dihydroxy-2-cyclopenten-1-yl)amino)methyl)-7-deazaguanosine). This Caulobacter vibrioides (strain ATCC 19089 / CIP 103742 / CB 15) (Caulobacter crescentus) protein is Queuine tRNA-ribosyltransferase.